A 643-amino-acid chain; its full sequence is UvrABC system protein C (643 aa).

A GIY-YIG domain is found at 25 to 104 (AEPGVYFMRD…IKQHQPHFNV (80 aa)). The UVR domain maps to 214–249 (SELVELLEAQMLQAAENLEFEKAAKIRDQIRGLEGL).

It belongs to the UvrC family. Interacts with UvrB in an incision complex.

It localises to the cytoplasm. Functionally, the UvrABC repair system catalyzes the recognition and processing of DNA lesions. UvrC both incises the 5' and 3' sides of the lesion. The N-terminal half is responsible for the 3' incision and the C-terminal half is responsible for the 5' incision. This Synechococcus elongatus (strain ATCC 33912 / PCC 7942 / FACHB-805) (Anacystis nidulans R2) protein is UvrABC system protein C.